Here is a 352-residue protein sequence, read N- to C-terminus: C-C chemokine receptor type 5 (352 aa).

At 1 to 30 the chain is on the extracellular side; it reads MDYQVSSPTYDIDYYTSEPCQKVNVKQIAA. The residue at position 3 (Tyr-3) is a Sulfotyrosine. Ser-6 and Ser-7 each carry an O-linked (GalNAc...) serine glycan. Sulfotyrosine occurs at positions 10, 14, and 15. 2 disulfides stabilise this stretch: Cys-20-Cys-269 and Cys-101-Cys-178. Residues 31–58 form a helical membrane-spanning segment; the sequence is RLLPPLYSLVFIFGFVGNILVVLILINC. Residues 59–68 lie on the Cytoplasmic side of the membrane; it reads KRLKSMTDIY. A helical membrane pass occupies residues 69-89; it reads LLNLAISDLFFLLTVPFWAHY. Topologically, residues 90–102 are extracellular; sequence AAAQWDFGNTMCQ. The chain crosses the membrane as a helical span at residues 103-124; that stretch reads LLTGLYFIGFFSGIFFIILLTI. The Cytoplasmic portion of the chain corresponds to 125–141; the sequence is DRYLAIVHAVFALKART. The helical transmembrane segment at 142–166 threads the bilayer; the sequence is VTFGVVTSVITWVVAVFASLPGIIF. Residues 167–198 lie on the Extracellular side of the membrane; the sequence is TRSQREGLHYTCSSHFPYSQYQFWKNFQTLKI. Residues 199–218 traverse the membrane as a helical segment; that stretch reads VILGLVLPLLVMVICYSGIL. At 219-235 the chain is on the cytoplasmic side; that stretch reads KTLLRCRNEKKRHRAVR. Residues 236–260 traverse the membrane as a helical segment; that stretch reads LIFTIMIVYFLFWAPYNIVLLLNTF. Over 261–277 the chain is Extracellular; sequence QEFFGLNNCSSSNRLDQ. Residues 278–301 form a helical membrane-spanning segment; it reads AMQVTETLGMTHCCINPIIYAFVG. Residues 302–352 are Cytoplasmic-facing; the sequence is EKFRNYLLVFFQKHIAKRFCKCCRIFQQEAPERASSVYTRSTGEQEISVGL. 3 S-palmitoyl cysteine lipidation sites follow: Cys-321, Cys-323, and Cys-324. Residues Ser-336, Ser-337, Ser-342, and Ser-349 each carry the phosphoserine; by BARK1 modification.

This sequence belongs to the G-protein coupled receptor 1 family. In terms of assembly, interacts with PRAF2. Efficient ligand binding to CCL3/MIP-1alpha and CCL4/MIP-1beta requires sulfation, O-glycosylation and sialic acid modifications. Glycosylation on Ser-6 is required for efficient binding of CCL4. Interacts with GRK2. Interacts with ARRB1 and ARRB2. Interacts with CNIH4. Interacts with S100A4; this interaction stimulates T-lymphocyte chemotaxis. Sulfated on at least 2 of the N-terminal tyrosines. Sulfation is required for efficient binding of the chemokines, CCL3 and CCL4. In terms of processing, palmitoylation in the C-terminal is important for cell surface expression. Post-translationally, phosphorylation on serine residues in the C-terminal is stimulated by binding CC chemokines especially by APO-RANTES. O-glycosylated, but not N-glycosylated. Ser-6 appears to be the major site even if Ser-7 may be also O-glycosylated. Also sialylated glycans present which contribute to chemokine binding. Thr-16 and Ser-17 may also be glycosylated and, if so, with small moieties such as a T-antigen.

The protein localises to the cell membrane. Functionally, receptor for a number of inflammatory CC-chemokines including CCL3/MIP-1-alpha, CCL4/MIP-1-beta and RANTES and subsequently transduces a signal by increasing the intracellular calcium ion level. May play a role in the control of granulocytic lineage proliferation or differentiation. Participates in T-lymphocyte migration to the infection site by acting as a chemotactic receptor. This is C-C chemokine receptor type 5 (CCR5) from Colobus polykomos (Western black-and-white colobus monkey).